Consider the following 607-residue polypeptide: uncharacterized protein (607 aa).

Positions 16–44 (CTVCRKRKLKCDGNKPCGRCIRLNTPKEC) form a DNA-binding region, zn(2)-C6 fungal-type.

It is found in the nucleus. This is an uncharacterized protein from Saccharomyces cerevisiae (strain ATCC 204508 / S288c) (Baker's yeast).